A 304-amino-acid polypeptide reads, in one-letter code: Cytochrome c biogenesis protein CcsA (304 aa).

A run of 8 helical transmembrane segments spans residues S11–V31, A37–L57, G63–L83, I96–L116, V141–V161, T212–N232, T246–L263, and V275–I295.

The protein belongs to the CcmF/CycK/Ccl1/NrfE/CcsA family. May interact with ccs1.

Its subcellular location is the cellular thylakoid membrane. Required during biogenesis of c-type cytochromes (cytochrome c6 and cytochrome f) at the step of heme attachment. This chain is Cytochrome c biogenesis protein CcsA, found in Synechococcus sp. (strain CC9605).